A 514-amino-acid chain; its full sequence is Ammonium transporter 1 member 2 (514 aa).

Helical transmembrane passes span leucine 56–glycine 76, valine 91–glycine 111, phenylalanine 140–alanine 160, phenylalanine 165–histidine 185, phenylalanine 212–valine 232, valine 257–leucine 277, glycine 291–threonine 313, isoleucine 328–valine 348, tryptophan 351–alanine 371, leucine 380–phenylalanine 400, and isoleucine 431–glycine 451. Residue threonine 472 is modified to Phosphothreonine.

Belongs to the ammonia transporter channel (TC 1.A.11.2) family. High expression in root.

Its subcellular location is the membrane. In terms of biological role, ammonium transporter probably involved in ammonium uptake from the soil. The polypeptide is Ammonium transporter 1 member 2 (AMT1-2) (Arabidopsis thaliana (Mouse-ear cress)).